Here is a 421-residue protein sequence, read N- to C-terminus: Serine hydroxymethyltransferase (421 aa).

(6S)-5,6,7,8-tetrahydrofolate is bound by residues Leu-121 and 125-127; that span reads GHL. Lys-230 carries the N6-(pyridoxal phosphate)lysine modification. (6S)-5,6,7,8-tetrahydrofolate is bound by residues Glu-246 and 354 to 356; that span reads SPF.

The protein belongs to the SHMT family. Homodimer. Requires pyridoxal 5'-phosphate as cofactor.

It is found in the cytoplasm. The catalysed reaction is (6R)-5,10-methylene-5,6,7,8-tetrahydrofolate + glycine + H2O = (6S)-5,6,7,8-tetrahydrofolate + L-serine. It functions in the pathway one-carbon metabolism; tetrahydrofolate interconversion. It participates in amino-acid biosynthesis; glycine biosynthesis; glycine from L-serine: step 1/1. Catalyzes the reversible interconversion of serine and glycine with tetrahydrofolate (THF) serving as the one-carbon carrier. This reaction serves as the major source of one-carbon groups required for the biosynthesis of purines, thymidylate, methionine, and other important biomolecules. Also exhibits THF-independent aldolase activity toward beta-hydroxyamino acids, producing glycine and aldehydes, via a retro-aldol mechanism. The chain is Serine hydroxymethyltransferase from Rickettsia felis (strain ATCC VR-1525 / URRWXCal2) (Rickettsia azadi).